A 363-amino-acid polypeptide reads, in one-letter code: UDP-N-acetylglucosamine--N-acetylmuramyl-(pentapeptide) pyrophosphoryl-undecaprenol N-acetylglucosamine transferase (363 aa).

UDP-N-acetyl-alpha-D-glucosamine contacts are provided by residues 15–17, asparagine 127, arginine 169, serine 197, isoleucine 251, 270–275, and glutamine 296; these read TGG and ALTVSE.

Belongs to the glycosyltransferase 28 family. MurG subfamily.

The protein localises to the cell inner membrane. It carries out the reaction di-trans,octa-cis-undecaprenyl diphospho-N-acetyl-alpha-D-muramoyl-L-alanyl-D-glutamyl-meso-2,6-diaminopimeloyl-D-alanyl-D-alanine + UDP-N-acetyl-alpha-D-glucosamine = di-trans,octa-cis-undecaprenyl diphospho-[N-acetyl-alpha-D-glucosaminyl-(1-&gt;4)]-N-acetyl-alpha-D-muramoyl-L-alanyl-D-glutamyl-meso-2,6-diaminopimeloyl-D-alanyl-D-alanine + UDP + H(+). It functions in the pathway cell wall biogenesis; peptidoglycan biosynthesis. In terms of biological role, cell wall formation. Catalyzes the transfer of a GlcNAc subunit on undecaprenyl-pyrophosphoryl-MurNAc-pentapeptide (lipid intermediate I) to form undecaprenyl-pyrophosphoryl-MurNAc-(pentapeptide)GlcNAc (lipid intermediate II). The chain is UDP-N-acetylglucosamine--N-acetylmuramyl-(pentapeptide) pyrophosphoryl-undecaprenol N-acetylglucosamine transferase from Dichelobacter nodosus (strain VCS1703A).